Here is a 465-residue protein sequence, read N- to C-terminus: tRNA modification GTPase MnmE (465 aa).

3 residues coordinate (6S)-5-formyl-5,6,7,8-tetrahydrofolate: arginine 24, glutamate 84, and lysine 127. The region spanning 223–383 (GLNIVLAGQP…LRGELLRLIG (161 aa)) is the TrmE-type G domain. Asparagine 233 lines the K(+) pocket. Residues 233–238 (NVGKSS), 252–258 (TAIAGTT), and 277–280 (DTAG) each bind GTP. Serine 237 is a Mg(2+) binding site. K(+) contacts are provided by threonine 252, isoleucine 254, and threonine 257. Threonine 258 is a binding site for Mg(2+). (6S)-5-formyl-5,6,7,8-tetrahydrofolate is bound at residue lysine 465.

This sequence belongs to the TRAFAC class TrmE-Era-EngA-EngB-Septin-like GTPase superfamily. TrmE GTPase family. Homodimer. Heterotetramer of two MnmE and two MnmG subunits. The cofactor is K(+).

It is found in the cytoplasm. Exhibits a very high intrinsic GTPase hydrolysis rate. Involved in the addition of a carboxymethylaminomethyl (cmnm) group at the wobble position (U34) of certain tRNAs, forming tRNA-cmnm(5)s(2)U34. This Janthinobacterium sp. (strain Marseille) (Minibacterium massiliensis) protein is tRNA modification GTPase MnmE.